A 150-amino-acid chain; its full sequence is Ribosome maturation factor RimP (150 aa).

It belongs to the RimP family.

It is found in the cytoplasm. Its function is as follows. Required for maturation of 30S ribosomal subunits. The protein is Ribosome maturation factor RimP of Methylococcus capsulatus (strain ATCC 33009 / NCIMB 11132 / Bath).